The sequence spans 165 residues: Keratin-associated protein 5-7 (165 aa).

7 consecutive repeat copies span residues Cys-35–Pro-38, Cys-41–Pro-44, Cys-47–Pro-50, Cys-116–Pro-119, Cys-126–Pro-129, Cys-145–Pro-148, and Cys-155–Pro-158. The tract at residues Cys-35–Pro-158 is 7 X 4 AA repeats of C-C-X-P.

The protein belongs to the KRTAP type 5 family. Interacts with hair keratins. Expressed in hair root but not in skin.

Its function is as follows. In the hair cortex, hair keratin intermediate filaments are embedded in an interfilamentous matrix, consisting of hair keratin-associated protein (KRTAP), which are essential for the formation of a rigid and resistant hair shaft through their extensive disulfide bond cross-linking with abundant cysteine residues of hair keratins. The matrix proteins include the high-sulfur and high-glycine-tyrosine keratins. The chain is Keratin-associated protein 5-7 (KRTAP5-7) from Homo sapiens (Human).